Here is a 104-residue protein sequence, read N- to C-terminus: uncharacterized protein (104 aa).

The N-terminal stretch at 1–23 is a signal peptide; sequence MDIHDYVELIALAFWVISVVSVG.

This is an uncharacterized protein from Lactobacillus helveticus (Lactobacillus suntoryeus).